Reading from the N-terminus, the 216-residue chain is Glycerol uptake facilitator protein-like 6 (216 aa).

2 consecutive transmembrane segments (helical) span residues 5 to 25 (LAEF…VVIA) and 30 to 50 (LAIG…FGGI). Positions 56-58 (NPA) match the NPA 1 motif. 3 helical membrane passes run 72–92 (ADAI…SAAV), 114–134 (IGSG…LMVI), and 147–167 (FAGL…LNLT). An NPA 2 motif is present at residues 172–174 (NPA). Residues 191–213 (LWVYILAPEVGAILAAFCARVMG) form a helical membrane-spanning segment.

The protein belongs to the MIP/aquaporin (TC 1.A.8) family.

It localises to the cell membrane. In terms of biological role, probable transporter that facilitates the transmembrane diffusion of an unknown substrate. Is not permeable to water, dihydroxyacetone, glycerol, urea, H(2)O(2) and D/L-lactic acid. The sequence is that of Glycerol uptake facilitator protein-like 6 from Lactiplantibacillus plantarum (strain ATCC BAA-793 / NCIMB 8826 / WCFS1) (Lactobacillus plantarum).